Here is a 461-residue protein sequence, read N- to C-terminus: Tubulin gamma chain (461 aa).

142–148 (AGGTGSG) provides a ligand contact to GTP.

Belongs to the tubulin family.

It localises to the cytoplasm. The protein localises to the cytoskeleton. It is found in the microtubule organizing center. Its subcellular location is the spindle pole body. Its function is as follows. Tubulin is the major constituent of microtubules. The gamma chain is found at microtubule organizing centers (MTOC) such as the spindle poles or the centrosome, suggesting that it is involved in the minus-end nucleation of microtubule assembly. This is Tubulin gamma chain (tbg) from Neurospora crassa (strain ATCC 24698 / 74-OR23-1A / CBS 708.71 / DSM 1257 / FGSC 987).